A 229-amino-acid polypeptide reads, in one-letter code: B-cell antigen receptor complex-associated protein beta chain (229 aa).

An N-terminal signal peptide occupies residues 1 to 28 (MARLALSPVPSHWMVALLLLLSAEPVPA). At 29 to 159 (ARSEDRYRNP…QLKQRNTLKD (131 aa)) the chain is on the extracellular side. In terms of domain architecture, Ig-like V-type spans 38 to 138 (PKGSACSRIW…TSEVYQGCGT (101 aa)). 2 cysteine pairs are disulfide-bonded: Cys43/Cys126 and Cys65/Cys122. Residues Asn73, Asn101, Asn127, and Asn128 are each glycosylated (N-linked (GlcNAc...) asparagine). Residues 160 to 180 (GIIMIQTLLIILFIIVPIFLL) traverse the membrane as a helical segment. Over 181–229 (LDKDDSKAGMEEDHTYEGLDIDQTATYEDIVTLRTGEVKWSVGEHPGQE) the chain is Cytoplasmic. Residues 185-213 (DSKAGMEEDHTYEGLDIDQTATYEDIVTL) form the ITAM domain. Phosphotyrosine; by SRC-type Tyr-kinases is present on residues Tyr196 and Tyr207.

As to quaternary structure, heterodimer of alpha and beta chains; disulfide-linked. Part of the B-cell antigen receptor complex where the alpha/beta chain heterodimer is non-covalently associated with an antigen-specific membrane-bound surface immunoglobulin of two heavy chains and two light chains. Interacts with LYN. Phosphorylated on tyrosine upon B-cell activation by SRC-type Tyr-kinases such as BLK, LYN and SYK. As to expression, B-cells.

It localises to the cell membrane. Required in cooperation with CD79A for initiation of the signal transduction cascade activated by the B-cell antigen receptor complex (BCR) which leads to internalization of the complex, trafficking to late endosomes and antigen presentation. Enhances phosphorylation of CD79A, possibly by recruiting kinases which phosphorylate CD79A or by recruiting proteins which bind to CD79A and protect it from dephosphorylation. The polypeptide is B-cell antigen receptor complex-associated protein beta chain (CD79B) (Homo sapiens (Human)).